The sequence spans 385 residues: Probable caffeine synthase MTL1 (385 aa).

Residues tyrosine 18, cysteine 62, asparagine 67, aspartate 101, leucine 102, serine 140, and phenylalanine 141 each coordinate S-adenosyl-L-homocysteine. Caffeine-binding residues include tyrosine 158, glutamine 161, and phenylalanine 162. Asparagine 179 provides a ligand contact to Mg(2+). Caffeine is bound at residue threonine 238. Mg(2+) is bound by residues aspartate 261, phenylalanine 263, and asparagine 264. Caffeine is bound at residue tyrosine 369.

This sequence belongs to the methyltransferase superfamily. Type-7 methyltransferase family. Mg(2+) serves as cofactor.

Its pathway is alkaloid biosynthesis. May be involved in the biosynthesis of caffeine. This Coffea canephora (Robusta coffee) protein is Probable caffeine synthase MTL1.